The primary structure comprises 124 residues: Small ribosomal subunit protein uS12 (124 aa).

Aspartate 89 carries the post-translational modification 3-methylthioaspartic acid. The disordered stretch occupies residues 104–124 (TDGVENRKQSRSKYGTKRPKK). A compositionally biased stretch (basic residues) spans 112 to 124 (QSRSKYGTKRPKK).

The protein belongs to the universal ribosomal protein uS12 family. Part of the 30S ribosomal subunit. Contacts proteins S8 and S17. May interact with IF1 in the 30S initiation complex.

In terms of biological role, with S4 and S5 plays an important role in translational accuracy. Its function is as follows. Interacts with and stabilizes bases of the 16S rRNA that are involved in tRNA selection in the A site and with the mRNA backbone. Located at the interface of the 30S and 50S subunits, it traverses the body of the 30S subunit contacting proteins on the other side and probably holding the rRNA structure together. The combined cluster of proteins S8, S12 and S17 appears to hold together the shoulder and platform of the 30S subunit. This is Small ribosomal subunit protein uS12 from Thermosipho melanesiensis (strain DSM 12029 / CIP 104789 / BI429).